The sequence spans 64 residues: Small, acid-soluble spore protein D (64 aa).

The protein belongs to the alpha/beta-type SASP family.

In terms of biological role, SASP are bound to spore DNA. They are double-stranded DNA-binding proteins that cause DNA to change to an a-like conformation. They protect the DNA backbone from chemical and enzymatic cleavage and are thus involved in dormant spore's high resistance to UV light. In Bacillus subtilis (strain 168), this protein is Small, acid-soluble spore protein D (sspD).